Reading from the N-terminus, the 229-residue chain is Potassium/proton antiporter CemA (229 aa).

Transmembrane regions (helical) follow at residues 7–27 (LTPLPYLASIVFLPWWISISF), 106–126 (IILHFSTNIICFAILSGYSIL), and 189–209 (IISGLVSTFPVILDTILKYWI).

It belongs to the CemA family.

It is found in the plastid. Its subcellular location is the chloroplast inner membrane. It carries out the reaction K(+)(in) + H(+)(out) = K(+)(out) + H(+)(in). Its function is as follows. Contributes to K(+)/H(+) antiport activity by supporting proton efflux to control proton extrusion and homeostasis in chloroplasts in a light-dependent manner to modulate photosynthesis. Prevents excessive induction of non-photochemical quenching (NPQ) under continuous-light conditions. Indirectly promotes efficient inorganic carbon uptake into chloroplasts. The chain is Potassium/proton antiporter CemA from Liriodendron tulipifera (Tuliptree).